Here is a 351-residue protein sequence, read N- to C-terminus: MKSAMTSSPLRVAIIGAGQVADKVHASYYCTRNDLELVAVCDSRLSQAQALAEKYGNASVWDDPQAMLLAVKPDVVSVCSPNRFHYEHTLMALEAGCHVMCEKPPAMTPEQAREMCDTARKLGKVLAYDFHHRFALDTQQLREQVTNGVLGEIYVTTARALRRCGVPGWGVFTNKELQGGGPLIDIGIHMLDAAMYVLGFPAVKSVNAHSFQKIGTQKSCGQFGEWDPATYSVEDSLFGTIEFHNGGILWLETSFALNIREQSIMNVSFCGDKAGATLFPAHIYTDNNGELMTLMQREIADDNRHLRSMEAFINHVQGKPVMIADAEQGYIIQQLVAALYQSAETGTRVEL.

The protein belongs to the Gfo/Idh/MocA family.

It catalyses the reaction a D-glucoside + NAD(+) = a 3-dehydro-D-glucoside + NADH + H(+). In terms of biological role, catalyzes the NADH-dependent reduction of the oxo group at C3 of 3-dehydro-D-glucosides leading to D-glucosides. Probably functions in a metabolic pathway that transforms D-gulosides to D-glucosides. Can use 3-dehydro-D-glucose, methyl alpha-3-dehydro-D-glucoside and methyl beta-3-dehydro-D-glucoside as substrates in vitro. However, the actual specific physiological substrates for this metabolic pathway are unknown. To a lesser extent, is also able to catalyze the reverse reactions, i.e. the NAD(+)-dependent oxidation of the hydroxyl group at C3 of D-glucosides leading to 3-dehydro-D-glucosides. Cannot act on UDP-glucose, UDP-N-acetyl-D-glucosamine, D-glucosamine, N-acetyl-D-glucosamine, or UDP-D-galactose. This is D-glucoside 3-dehydrogenase (ycjS) from Escherichia coli (strain K12).